We begin with the raw amino-acid sequence, 226 residues long: Putative N-acetylmannosamine-6-phosphate 2-epimerase (226 aa).

Belongs to the NanE family.

It catalyses the reaction an N-acyl-D-glucosamine 6-phosphate = an N-acyl-D-mannosamine 6-phosphate. It participates in amino-sugar metabolism; N-acetylneuraminate degradation; D-fructose 6-phosphate from N-acetylneuraminate: step 3/5. Converts N-acetylmannosamine-6-phosphate (ManNAc-6-P) to N-acetylglucosamine-6-phosphate (GlcNAc-6-P). The protein is Putative N-acetylmannosamine-6-phosphate 2-epimerase of Mycoplasma capricolum subsp. capricolum (strain California kid / ATCC 27343 / NCTC 10154).